Consider the following 139-residue polypeptide: Toxin FitB (139 aa).

Residues 2-123 (ILLDTNVISE…HSLTVATRDT (122 aa)) form the PINc domain. Mg(2+) contacts are provided by D5 and D104.

The protein belongs to the PINc/VapC protein family. In terms of assembly, forms a heterodimer with FitA, 4 FitAB heterodimers form a complex that binds to promoter DNA. The complex is also seen in solution. This protein does not actually contact DNA. Mg(2+) serves as cofactor.

Functionally, toxic component of a type II toxin-antitoxin (TA) system. Plays a role in the speed with which bacteria traverse human epithelial cells; disruption of the locus increases the speed of trafficking about 2-4-fold. FitAB binds to its own promoter better than FitA alone. The expected nuclease activity was not observed for the FitAB complex, perhaps because FitA (the antitoxin) prevents metal binding and thus catalysis by FitB. This chain is Toxin FitB (fitB), found in Neisseria gonorrhoeae (strain ATCC 700825 / FA 1090).